We begin with the raw amino-acid sequence, 278 residues long: Complement component 1 Q subcomponent-binding protein, mitochondrial (278 aa).

The N-terminal 70 residues, 1–70 (MLPLLRCVPR…PVPCACGCGA (70 aa)), are a transit peptide targeting the mitochondrion. The tract at residues 73–90 (TEGDKAFVEFLTDEIKEE) is C1q binding. N6-acetyllysine occurs at positions 88 and 91. Residues 133–162 (NNSIPPTFDGEEEPSQGQKAEEQEPERTST) form a disordered region. An interaction with MAVS region spans residues 165 to 209 (FVVEVTKTDGKKTLVLDCHYPEDEIGHEDEAESDIFSIKEVSFQA). Tyrosine 184 bears the Phosphotyrosine mark. Phosphoserine is present on residues serine 197 and serine 201. A Phosphothreonine modification is found at threonine 210.

Belongs to the MAM33 family. Homotrimer; three monomers form a donut-shaped structure with an unusually asymmetric charge distribution on the surface. Interacts with CDK13, HRK, VTN, NFYB, ADRA1B, FOXC1, DDX21, DDX50, NCL, SRSF1 and SRSF9. Interacts with CD93; the association may represent a cell surface C1q receptor. Interacts with KRT1; the association represents a cell surface kininogen receptor. Interacts with CD209; the interaction is indicative for a C1q:C1QBP:CD209 signaling complex. Interacts with FBL and RRP1; the respective interactions with C1QBP are competitive. Probably associates with the mitoribosome. Interacts with MAVS; the interaction occurs upon viral transfection. Interacts with PPIF. Interacts with U2AF1L4. Interacts with PLEKHN1. Interacts with VGF-derived peptide TLQP-21. Interacts with MRE11 and RAD50; forming the MRC (MRE11-RAD50-C1QBP) complex that inhibits the activity of MRE11. Ubiquitous.

It is found in the mitochondrion matrix. It localises to the nucleus. Its subcellular location is the cell membrane. The protein resides in the secreted. The protein localises to the cytoplasm. It is found in the nucleolus. Its function is as follows. Is believed to be a multifunctional and multicompartmental protein involved in inflammation and infection processes, ribosome biogenesis, protein synthesis in mitochondria, regulation of apoptosis, transcriptional regulation and pre-mRNA splicing. At the cell surface is thought to act as an endothelial receptor for plasma proteins of the complement and kallikrein-kinin cascades. Putative receptor for C1q; specifically binds to the globular 'heads' of C1q thus inhibiting C1; may perform the receptor function through a complex with C1qR/CD93. In complex with cytokeratin-1/KRT1 is a high affinity receptor for kininogen-1/HMWK. Can also bind other plasma proteins, such as coagulation factor XII leading to its autoactivation. May function to bind initially fluid kininogen-1 to the cell membrane. The secreted form may enhance both extrinsic and intrinsic coagulation pathways. It is postulated that the cell surface form requires docking with transmembrane proteins for downstream signaling which might be specific for a cell-type or response. By acting as C1q receptor is involved in chemotaxis of immature dendritic cells and neutrophils and is proposed to signal through CD209/DC-SIGN on immature dendritic cells, through integrin alpha-4/beta-1 during trophoblast invasion of the decidua, and through integrin beta-1 during endothelial cell adhesion and spreading. Signaling involved in inhibition of innate immune response is implicating the PI3K-AKT/PKB pathway. Required for protein synthesis in mitochondria. In mitochondrial translation may be involved in formation of functional 55S mitoribosomes; the function seems to involve its RNA-binding activity. Acts as a RNA modification reader, which specifically recognizes and binds mitochondrial RNAs modified by C5-methylcytosine (m5C) in response to stress, and promotes recruitment of the mitochondrial degradosome complex, leading to their degradation. May be involved in the nucleolar ribosome maturation process; the function may involve the exchange of FBL for RRP1 in the association with pre-ribosome particles. Involved in regulation of RNA splicing by inhibiting the RNA-binding capacity of SRSF1 and its phosphorylation. Is required for the nuclear translocation of splicing factor U2AF1L4. Involved in regulation of CDKN2A- and HRK-mediated apoptosis. May be involved in regulation of FOXC1 transcriptional activity and NFY/CCAAT-binding factor complex-mediated transcription. May play a role in antibacterial defense. Acts as a regulator of DNA repair via homologous recombination by inhibiting the activity of MRE11: interacts with unphosphorylated MRE11 and RAD50 in absence of DNA damage, preventing formation and activity of the MRN complex. Following DNA damage, dissociates from phosphorylated MRE11, allowing formation of the MRN complex. The sequence is that of Complement component 1 Q subcomponent-binding protein, mitochondrial (C1qbp) from Mus musculus (Mouse).